A 148-amino-acid chain; its full sequence is Multiprotein-bridging factor 1 (148 aa).

The interval 1–97 is disordered; that stretch reads MSDWDTVTKI…AKGWAQKDLS (97 aa). Positions 82–136 constitute an HTH cro/C1-type domain; the sequence is IQKGRQAKGWAQKDLSQRINEKPQVVNDYESGRAIPNQQVLSKMERALGIKLRGQ. The segment at residues 93–112 is a DNA-binding region (H-T-H motif); sequence QKDLSQRINEKPQVVNDYES.

It belongs to the MBF1 family.

Its function is as follows. Transcriptional coactivator that stimulates GCN4-dependent transcriptional activity by bridging the DNA-binding region of GCN4 and TBP (SPT15), thereby recruiting TBP to GCN4-bound promoters. Involved in induction of the ribosome quality control (RQC) pathway; a pathway that degrades nascent peptide chains during problematic translation. Required to prevent stalled ribosomes from frameshifting. This Schizosaccharomyces pombe (strain 972 / ATCC 24843) (Fission yeast) protein is Multiprotein-bridging factor 1 (mbf1).